The following is a 322-amino-acid chain: Peroxisomal adenine nucleotide carrier 1 (322 aa).

3 Solcar repeats span residues 5-94 (LESV…FKRV), 104-184 (IGTK…LKQH), and 202-298 (LSAF…ITAT). A run of 6 helical transmembrane segments spans residues 8–28 (VSEATSGAIGSLLSTTILYPL), 104–124 (IGTKANLLIAAAAGACTSVLI), 158–178 (FDGLGISLLLTSNPAIQYTVF), 201–221 (VLSAFMAFVLGAVSKSVATVL), 254–274 (IPGVVYAIWRKEGMLGFFKGL), and 286–306 (ALLLMIKEKITATTWILILAI).

The protein belongs to the mitochondrial carrier (TC 2.A.29) family. As to expression, expressed in stamens, pollen grains, seeds, leaves, cotyledons, roots, stems, flowers, hypocotyls and siliques.

The protein resides in the peroxisome membrane. Its function is as follows. Peroxisomal adenine nucleotide transporter catalyzing the counterexchange of ATP with AMP. ATP is needed by reactions that generate acyl-CoA for peroxisomal fatty acid beta-oxidation during postgerminative growth. Required for the beta-oxidation reactions involved in auxin biosynthesis and for the conversion of seed-reserved triacylglycerols into sucrose that is necessary for growth before the onset of photosynthesis. This is Peroxisomal adenine nucleotide carrier 1 (PNC1) from Arabidopsis thaliana (Mouse-ear cress).